A 163-amino-acid chain; its full sequence is Small ribosomal subunit protein uS5 (163 aa).

In terms of domain architecture, S5 DRBM spans 8–71 (FIEKVVSLNR…EQARKAMMKI (64 aa)).

This sequence belongs to the universal ribosomal protein uS5 family. Part of the 30S ribosomal subunit. Contacts proteins S4 and S8.

Its function is as follows. With S4 and S12 plays an important role in translational accuracy. In terms of biological role, located at the back of the 30S subunit body where it stabilizes the conformation of the head with respect to the body. The sequence is that of Small ribosomal subunit protein uS5 from Lawsonia intracellularis (strain PHE/MN1-00).